The chain runs to 996 residues: Alanine--tRNA ligase, chloroplastic/mitochondrial (996 aa).

Positions 677, 681, 779, and 783 each coordinate Zn(2+).

This sequence belongs to the class-II aminoacyl-tRNA synthetase family. Monomer. Requires Zn(2+) as cofactor.

It is found in the plastid. The protein localises to the chloroplast. Its subcellular location is the mitochondrion. It catalyses the reaction tRNA(Ala) + L-alanine + ATP = L-alanyl-tRNA(Ala) + AMP + diphosphate. In terms of biological role, catalyzes the attachment of alanine to tRNA(Ala) in a two-step reaction: alanine is first activated by ATP to form Ala-AMP and then transferred to the acceptor end of tRNA(Ala). Also edits incorrectly charged tRNA(Ala) via its editing domain. The sequence is that of Alanine--tRNA ligase, chloroplastic/mitochondrial from Oryza sativa subsp. japonica (Rice).